We begin with the raw amino-acid sequence, 385 residues long: Fe-S cluster assembly protein DRE2 (385 aa).

The interval 1-177 (MTSSINILLL…KKLNKNDMTI (177 aa)) is N-terminal SAM-like domain. The segment at 178–240 (NVPQEIDNIT…NDLLKYNNHN (63 aa)) is linker. The tract at residues 200–226 (YFSSDDENSSDGSLSDNANEEEEDDDE) is disordered. A compositionally biased stretch (acidic residues) spans 217–226 (ANEEEEDDDE). [2Fe-2S] cluster is bound by residues Cys261, Cys275, Cys278, and Cys280. A fe-S binding site A region spans residues 261-280 (CELSLNGGKKRKKACKDCTC). Cys348, Cys351, Cys359, and Cys362 together coordinate [4Fe-4S] cluster. Short sequence motifs (cx2C motif) lie at residues 348 to 351 (CGSC) and 359 to 362 (CDGC). The fe-S binding site B stretch occupies residues 348–362 (CGSCALGDAFRCDGC).

Belongs to the anamorsin family. In terms of assembly, monomer. Interacts with TAH18. Interacts with MIA40. [2Fe-2S] cluster serves as cofactor. Requires [4Fe-4S] cluster as cofactor.

The protein resides in the cytoplasm. The protein localises to the mitochondrion intermembrane space. Its function is as follows. Component of the cytosolic iron-sulfur (Fe-S) protein assembly (CIA) machinery required for the maturation of extramitochondrial Fe-S proteins. Part of an electron transfer chain functioning in an early step of cytosolic Fe-S biogenesis, facilitating the de novo assembly of a [4Fe-4S] cluster on the scaffold complex CFD1-NBP35. Electrons are transferred to DRE2 from NADPH via the FAD- and FMN-containing protein TAH18. TAH18-DRE2 are also required for the assembly of the diferric tyrosyl radical cofactor of ribonucleotide reductase (RNR), probably by providing electrons for reduction during radical cofactor maturation in the catalytic small subunit RNR2. The protein is Fe-S cluster assembly protein DRE2 of Candida dubliniensis (strain CD36 / ATCC MYA-646 / CBS 7987 / NCPF 3949 / NRRL Y-17841) (Yeast).